We begin with the raw amino-acid sequence, 147 residues long: Hemoglobin subunit epsilon (147 aa).

Residues His-3–His-147 enclose the Globin domain. A phosphoserine mark is found at Ser-14 and Ser-51. Heme b-binding residues include His-64 and His-93.

Belongs to the globin family. In terms of assembly, heterotetramer of two alpha chains and two epsilon chains in early embryonic hemoglobin Gower-2; two zeta chains and two epsilon chains in early embryonic hemoglobin Gower-1. In terms of tissue distribution, red blood cells.

Functionally, the epsilon chain is a beta-type chain of early mammalian embryonic hemoglobin. The polypeptide is Hemoglobin subunit epsilon (HBE1) (Otolemur crassicaudatus (Brown greater galago)).